Here is a 616-residue protein sequence, read N- to C-terminus: Sodium- and chloride-dependent transporter XTRP3 (616 aa).

Over residues 1–11 (MRLAIKRRASR) the composition is skewed to basic residues. The disordered stretch occupies residues 1–26 (MRLAIKRRASRGQRPGPDEKRARDME). Residues 1-37 (MRLAIKRRASRGQRPGPDEKRARDMEKARPQWGNPLQ) are Cytoplasmic-facing. A compositionally biased stretch (basic and acidic residues) spans 16-26 (GPDEKRARDME). A helical membrane pass occupies residues 38–58 (FVFACISYAVGLGNVWRFPYL). Over 59 to 66 (CQMYGGGS) the chain is Extracellular. Residues 67-87 (FLVPYLIMLIVEGMPLLYLEL) traverse the membrane as a helical segment. At 88–103 (AVGQRMRQGSIGAWRT) the chain is on the cytoplasmic side. The chain crosses the membrane as a helical span at residues 104–124 (ISPYLSGVGVASVVVSFFLSM). The Extracellular portion of the chain corresponds to 125–189 (YYNVINAWGF…ISPSIQENGG (65 aa)). N-linked (GlcNAc...) asparagine glycosylation is present at Asn-155. Residues 190–210 (VQWEPALCLTLAWLMVYLCIL) traverse the membrane as a helical segment. The Cytoplasmic segment spans residues 211-218 (RGTESTGK). Residues 219 to 239 (VVYFTALMPYCVLIIYLVRGL) traverse the membrane as a helical segment. The Extracellular portion of the chain corresponds to 240–265 (TLHGATNGLMYMFTPKIEQLANPKAW). A helical membrane pass occupies residues 266–286 (INAATQIFFSLGLGFGSLIAF). Residues 287 to 300 (ASYNEPSNDCQKHA) are Cytoplasmic-facing. The helical transmembrane segment at 301-321 (VIVSVINSSTSIFASIVTFSI) threads the bilayer. The Extracellular portion of the chain corresponds to 322–413 (YGFKATFNYE…EAIKNMEVSQ (92 aa)). An N-linked (GlcNAc...) asparagine glycan is attached at Asn-381. The chain crosses the membrane as a helical span at residues 414 to 434 (LWSVLYFFMLLMLGMGSMLGN). Over 435–455 (TAAILTPLTDSKVISSYLPKE) the chain is Cytoplasmic. Residues 456 to 476 (AISGLVCLINCAVGMVFTMEA) traverse the membrane as a helical segment. At 477 to 489 (GNYWFDIFNDYAA) the chain is on the extracellular side. Residues 490-510 (TLSLLLIVLVETIAVCYVYGL) form a helical membrane-spanning segment. Residues 511-533 (RRFESDLRAMTGRPLNWYWKAMW) are Cytoplasmic-facing. A helical membrane pass occupies residues 534 to 554 (AFVSPLLIIGLFIFYLSDYIL). The Extracellular portion of the chain corresponds to 555–578 (TGTLQYQAWDATQGQLVTKDYPPH). The helical transmembrane segment at 579–599 (ALAVIGLLVASSTMCIPLVAL) threads the bilayer. The Cytoplasmic portion of the chain corresponds to 600-616 (GTFIRNRLKRGGSSPVA).

It belongs to the sodium:neurotransmitter symporter (SNF) (TC 2.A.22) family. SLC6A20 subfamily. Highly expressed in epithelial cells of duodenum, jejunum, ileum, stomach, cecum, colon and kidney proximal tubule. Also expressed in the choroid plexus, microglia and meniges of the brain and in the ovary.

The protein localises to the apical cell membrane. The enzyme catalyses L-proline(out) + chloride(out) + 2 Na(+)(out) = L-proline(in) + chloride(in) + 2 Na(+)(in). It carries out the reaction 4-hydroxy-L-proline(out) + chloride(out) + 2 Na(+)(out) = 4-hydroxy-L-proline(in) + chloride(in) + 2 Na(+)(in). The catalysed reaction is 2-methyl-2-(methylamino)propanoate(out) + chloride(out) + 2 Na(+)(out) = 2-methyl-2-(methylamino)propanoate(in) + chloride(in) + 2 Na(+)(in). It catalyses the reaction L-pipecolate(out) + chloride(out) + 2 Na(+)(out) = L-pipecolate(in) + chloride(in) + 2 Na(+)(in). The enzyme catalyses glycine betaine(out) + chloride(out) + 2 Na(+)(out) = glycine betaine(in) + chloride(in) + 2 Na(+)(in). It carries out the reaction glycine(out) + chloride(out) + 2 Na(+)(out) = glycine(in) + chloride(in) + 2 Na(+)(in). Mediates the Na(+)- and Cl(-)-dependent uptake of imino acids such as L-proline, N-methyl-L-proline and pipecolate as well as N-methylated amino acids. Also transports glycine, regulates proline and glycine homeostasis in the brain playing a role in the modulation of NMDAR currents. In Rattus norvegicus (Rat), this protein is Sodium- and chloride-dependent transporter XTRP3.